Reading from the N-terminus, the 452-residue chain is Pup--protein ligase (452 aa).

Glutamate 9 is a binding site for Mg(2+). Residue arginine 53 participates in ATP binding. Residue tyrosine 55 participates in Mg(2+) binding. Catalysis depends on aspartate 57, which acts as the Proton acceptor. Glutamate 63 contacts Mg(2+). Threonine 66 and tryptophan 419 together coordinate ATP.

This sequence belongs to the Pup ligase/Pup deamidase family. Pup-conjugating enzyme subfamily.

It carries out the reaction ATP + [prokaryotic ubiquitin-like protein]-L-glutamate + [protein]-L-lysine = ADP + phosphate + N(6)-([prokaryotic ubiquitin-like protein]-gamma-L-glutamyl)-[protein]-L-lysine.. It participates in protein degradation; proteasomal Pup-dependent pathway. The protein operates within protein modification; protein pupylation. Catalyzes the covalent attachment of the prokaryotic ubiquitin-like protein modifier Pup to the proteasomal substrate proteins, thereby targeting them for proteasomal degradation. This tagging system is termed pupylation. The ligation reaction involves the side-chain carboxylate of the C-terminal glutamate of Pup and the side-chain amino group of a substrate lysine. The protein is Pup--protein ligase of Mycobacterium tuberculosis (strain KZN 1435 / MDR).